The chain runs to 429 residues: Saccharopine dehydrogenase-like oxidoreductase (429 aa).

The residue at position 2 (alanine 2) is an N-acetylalanine. Serine 217 is modified (phosphoserine).

This sequence belongs to the saccharopine dehydrogenase family.

The chain is Saccharopine dehydrogenase-like oxidoreductase (SCCPDH) from Pongo abelii (Sumatran orangutan).